A 196-amino-acid polypeptide reads, in one-letter code: Probable molybdenum cofactor guanylyltransferase (196 aa).

GTP is bound by residues 7–9 (LAG), Lys19, Asp68, and Asp93. Position 93 (Asp93) interacts with Mg(2+).

This sequence belongs to the MobA family. Requires Mg(2+) as cofactor.

It localises to the cytoplasm. It carries out the reaction Mo-molybdopterin + GTP + H(+) = Mo-molybdopterin guanine dinucleotide + diphosphate. Transfers a GMP moiety from GTP to Mo-molybdopterin (Mo-MPT) cofactor (Moco or molybdenum cofactor) to form Mo-molybdopterin guanine dinucleotide (Mo-MGD) cofactor. The chain is Probable molybdenum cofactor guanylyltransferase from Pyrococcus furiosus (strain ATCC 43587 / DSM 3638 / JCM 8422 / Vc1).